Reading from the N-terminus, the 205-residue chain is uncharacterized protein (205 aa).

The next 5 helical transmembrane spans lie at 4-24 (LAFLILLIVFSNLSLVNAIDD), 105-125 (KWFIAISILILGIILATLWIL), 130-150 (FLLFLAIFGLIVPFLQFKIPN), 151-171 (WLFNILALPLFVYIKFIVPEC), and 182-202 (ITIPISMYGWILIGLAVKFII).

It localises to the cell membrane. This is an uncharacterized protein from Methanocaldococcus jannaschii (strain ATCC 43067 / DSM 2661 / JAL-1 / JCM 10045 / NBRC 100440) (Methanococcus jannaschii).